Reading from the N-terminus, the 76-residue chain is Sec-independent protein translocase protein TatA (76 aa).

Residues 1–21 (MGGLSIWHWLIVLLIVALVFG) form a helical membrane-spanning segment. Residues 43-76 (MKDGDAPADAQQLPRSGTVDVNAKEATRSDSNKA) are disordered. The segment covering 64 to 76 (NAKEATRSDSNKA) has biased composition (basic and acidic residues).

This sequence belongs to the TatA/E family. As to quaternary structure, the Tat system comprises two distinct complexes: a TatABC complex, containing multiple copies of TatA, TatB and TatC subunits, and a separate TatA complex, containing only TatA subunits. Substrates initially bind to the TatABC complex, which probably triggers association of the separate TatA complex to form the active translocon.

It localises to the cell inner membrane. Functionally, part of the twin-arginine translocation (Tat) system that transports large folded proteins containing a characteristic twin-arginine motif in their signal peptide across membranes. TatA could form the protein-conducting channel of the Tat system. In Burkholderia multivorans (strain ATCC 17616 / 249), this protein is Sec-independent protein translocase protein TatA.